A 619-amino-acid chain; its full sequence is Dihydroxy-acid dehydratase 1 (619 aa).

Position 81 (Asp81) interacts with Mg(2+). Cys122 provides a ligand contact to [2Fe-2S] cluster. Residues Asp123 and Lys124 each contribute to the Mg(2+) site. Lys124 carries the post-translational modification N6-carboxylysine. Cys198 lines the [2Fe-2S] cluster pocket. Glu494 contacts Mg(2+). Ser520 (proton acceptor) is an active-site residue.

It belongs to the IlvD/Edd family. As to quaternary structure, homodimer. Requires [2Fe-2S] cluster as cofactor. It depends on Mg(2+) as a cofactor.

It catalyses the reaction (2R)-2,3-dihydroxy-3-methylbutanoate = 3-methyl-2-oxobutanoate + H2O. It carries out the reaction (2R,3R)-2,3-dihydroxy-3-methylpentanoate = (S)-3-methyl-2-oxopentanoate + H2O. Its pathway is amino-acid biosynthesis; L-isoleucine biosynthesis; L-isoleucine from 2-oxobutanoate: step 3/4. It participates in amino-acid biosynthesis; L-valine biosynthesis; L-valine from pyruvate: step 3/4. In terms of biological role, functions in the biosynthesis of branched-chain amino acids. Catalyzes the dehydration of (2R,3R)-2,3-dihydroxy-3-methylpentanoate (2,3-dihydroxy-3-methylvalerate) into 2-oxo-3-methylpentanoate (2-oxo-3-methylvalerate) and of (2R)-2,3-dihydroxy-3-methylbutanoate (2,3-dihydroxyisovalerate) into 2-oxo-3-methylbutanoate (2-oxoisovalerate), the penultimate precursor to L-isoleucine and L-valine, respectively. This is Dihydroxy-acid dehydratase 1 from Bordetella bronchiseptica (strain ATCC BAA-588 / NCTC 13252 / RB50) (Alcaligenes bronchisepticus).